A 155-amino-acid chain; its full sequence is Lipoprotein signal peptidase (155 aa).

Helical transmembrane passes span 52–72 and 85–105; these read ILQG…AGIV and LGVA…DRVF. Active-site residues include D111 and D129. The helical transmembrane segment at 124–144 threads the bilayer; that stretch reads IFNIADSSLCVGVILLFIQML.

The protein belongs to the peptidase A8 family.

It localises to the cell membrane. It catalyses the reaction Release of signal peptides from bacterial membrane prolipoproteins. Hydrolyzes -Xaa-Yaa-Zaa-|-(S,diacylglyceryl)Cys-, in which Xaa is hydrophobic (preferably Leu), and Yaa (Ala or Ser) and Zaa (Gly or Ala) have small, neutral side chains.. Its pathway is protein modification; lipoprotein biosynthesis (signal peptide cleavage). Its function is as follows. This protein specifically catalyzes the removal of signal peptides from prolipoproteins. In Bacillus pumilus (strain SAFR-032), this protein is Lipoprotein signal peptidase.